The sequence spans 439 residues: Putative FBD-associated F-box protein At1g05080 (439 aa).

The 47-residue stretch at 12 to 58 (EDRISVLPEDLLVVILDLLPTKDVVATMILSKRWLSIWTMVRTLEYT) folds into the F-box domain. In terms of domain architecture, FBD spans 360–410 (SWKQPSHVPECLSSQLEIFEWRDYGDRIIEEEFLTYVLANSKRLKTATISL).

The chain is Putative FBD-associated F-box protein At1g05080 from Arabidopsis thaliana (Mouse-ear cress).